The following is a 47-amino-acid chain: MDQAIYTLHEFMLHTKNWTYILMGVTLLVYVGYWLFLTGRDEKIRKY.

Residues 18 to 37 (WTYILMGVTLLVYVGYWLFL) form a helical membrane-spanning segment.

Its subcellular location is the cell membrane. HMWC (high-molecular-weight cytochrome c), ORF2, ORF3, ORF4, ORF5 and ORF6 in the HMC operon form a transmembrane protein complex that allows electron flow from the periplasmic hydrogenase to the cytoplasmic enzymes that catalyze reduction of sulfates. This chain is Protein DVU_0533, found in Nitratidesulfovibrio vulgaris (strain ATCC 29579 / DSM 644 / CCUG 34227 / NCIMB 8303 / VKM B-1760 / Hildenborough) (Desulfovibrio vulgaris).